A 198-amino-acid chain; its full sequence is (S)-2-hydroxypropylphosphonic acid epoxidase (198 aa).

One can recognise an HTH cro/C1-type domain in the interval 15-70; sequence LKDRREQVKMDHAALASLLGETPETVAAWENGEGGELTLTQLGRIAHVLGTSIGAL. Lys-23 serves as a coordination point for substrate. The H-T-H motif DNA-binding region spans 26–45; sequence HAALASLLGETPETVAAWEN. Substrate is bound by residues Arg-97, Tyr-105, 135–138, and Glu-142; that span reads NSGH. The region spanning 136–196 is the Cupin type-2 domain; it reads SGHAGNEFLF…GTGSAKLIAV (61 aa). His-138, Glu-142, and His-180 together coordinate Fe cation.

The protein belongs to the non-heme iron-dependent dioxygenase family. In terms of assembly, homotetramer. Requires Fe(2+) as cofactor.

The catalysed reaction is (S)-2-hydroxypropylphosphonate + H2O2 = (1R,2S)-epoxypropylphosphonate + 2 H2O. It participates in antibiotic biosynthesis; fosfomycin biosynthesis. Functionally, non-heme-dependent dioxygenase that catalyzes the oxidative epoxidation of (S)-2-hydroxypropylphosphonate into (1R,2S)-epoxypropylphosphonate, the final step in the biosynthesis of fosfomycin antibiotic. The protein is (S)-2-hydroxypropylphosphonic acid epoxidase (hppE) of Streptomyces wedmorensis.